A 300-amino-acid polypeptide reads, in one-letter code: Ubiquinone biosynthesis protein COQ4, mitochondrial (300 aa).

Residues H173, D174, H177, and E189 each contribute to the Zn(2+) site.

Belongs to the COQ4 family. Component of a multi-subunit COQ enzyme complex, composed of at least COQ3, COQ4, COQ5, COQ6, COQ7 and COQ9. It depends on Zn(2+) as a cofactor.

The protein localises to the mitochondrion inner membrane. The catalysed reaction is a 4-hydroxy-3-methoxy-5-(all-trans-polyprenyl)benzoate + H(+) = a 2-methoxy-6-(all-trans-polyprenyl)phenol + CO2. It functions in the pathway cofactor biosynthesis; ubiquinone biosynthesis. Functionally, lyase that catalyzes the C1-decarboxylation of 4-hydroxy-3-methoxy-5-(all-trans-polyprenyl)benzoic acid into 2-methoxy-6-(all-trans-polyprenyl)phenol during ubiquinone biosynthesis. The sequence is that of Ubiquinone biosynthesis protein COQ4, mitochondrial from Cryptococcus neoformans var. neoformans serotype D (strain JEC21 / ATCC MYA-565) (Filobasidiella neoformans).